Here is a 550-residue protein sequence, read N- to C-terminus: Beta-cubebene synthase (550 aa).

Aspartate 303, aspartate 307, aspartate 447, and glutamate 455 together coordinate Mg(2+). A DDXXD motif motif is present at residues 303–307 (DDTYD).

The protein belongs to the terpene synthase family. Tpsa subfamily. The cofactor is Mg(2+). As to expression, expressed in young developing leaves and in stamens. Not detected in tepals and carpels.

The catalysed reaction is (2E,6E)-farnesyl diphosphate = beta-cubebene + diphosphate. It participates in secondary metabolite biosynthesis; terpenoid biosynthesis. Its function is as follows. Sesquiterpene synthase converting farnesyl diphosphate into beta-cubebene (24.5%), alpha-muurolene (19.3%), delta-cadinol (18.6%), delta-elemene (16.0%), tau-muurolene (10.8%), and beta-elemene (10.8%). No activity with geranyl diphosphate or geranylgeranyl diphosphate. The sequence is that of Beta-cubebene synthase from Magnolia grandiflora (Southern magnolia).